Reading from the N-terminus, the 367-residue chain is uncharacterized protein (367 aa).

It belongs to the mimivirus L17x/L18x family.

This is an uncharacterized protein from Acanthamoeba polyphaga (Amoeba).